The sequence spans 218 residues: Large ribosomal subunit protein bL25 (218 aa).

Positions 187–218 (SATAAVEEAKEDGAPEESAQGQGAAEAQETNK) are disordered. A compositionally biased stretch (low complexity) spans 202–218 (EESAQGQGAAEAQETNK).

Belongs to the bacterial ribosomal protein bL25 family. CTC subfamily. As to quaternary structure, part of the 50S ribosomal subunit; part of the 5S rRNA/L5/L18/L25 subcomplex. Contacts the 5S rRNA. Binds to the 5S rRNA independently of L5 and L18.

This is one of the proteins that binds to the 5S RNA in the ribosome where it forms part of the central protuberance. The polypeptide is Large ribosomal subunit protein bL25 (Anaplasma marginale (strain St. Maries)).